We begin with the raw amino-acid sequence, 426 residues long: PHD finger-containing protein 6 (426 aa).

A PHD-type zinc finger spans residues arginine 9–arginine 59. Residues cysteine 12, cysteine 15, cysteine 27, cysteine 30, histidine 36, cysteine 39, cysteine 53, and cysteine 56 each contribute to the Zn(2+) site. Disordered stretches follow at residues threonine 122–phenylalanine 144 and arginine 185–alanine 205.

Interacts directly with AIPP3/BDT1.

Functionally, together with AIPP3/BDT1, cooperates to form a BAH-PHD bivalent histone reader complex able to read histone H3 lysine 27 trimethylation (H3K27me3) histone marks in order to regulate transcription, especially to prevent early flowering; promotes AIPP3/BDT1 binding to H3K27me3. The sequence is that of PHD finger-containing protein 6 from Arabidopsis thaliana (Mouse-ear cress).